Consider the following 135-residue polypeptide: UPF0102 protein PGN_1801 (135 aa).

Belongs to the UPF0102 family.

In Porphyromonas gingivalis (strain ATCC 33277 / DSM 20709 / CIP 103683 / JCM 12257 / NCTC 11834 / 2561), this protein is UPF0102 protein PGN_1801.